The sequence spans 313 residues: Aspartate carbamoyltransferase catalytic subunit (313 aa).

Arg58 and Thr59 together coordinate carbamoyl phosphate. Position 86 (Lys86) interacts with L-aspartate. Residues Arg108, His136, and Gln139 each coordinate carbamoyl phosphate. Residues Arg169 and Arg223 each contribute to the L-aspartate site. Positions 264 and 265 each coordinate carbamoyl phosphate.

It belongs to the aspartate/ornithine carbamoyltransferase superfamily. ATCase family. As to quaternary structure, heterododecamer (2C3:3R2) of six catalytic PyrB chains organized as two trimers (C3), and six regulatory PyrI chains organized as three dimers (R2).

The enzyme catalyses carbamoyl phosphate + L-aspartate = N-carbamoyl-L-aspartate + phosphate + H(+). Its pathway is pyrimidine metabolism; UMP biosynthesis via de novo pathway; (S)-dihydroorotate from bicarbonate: step 2/3. Catalyzes the condensation of carbamoyl phosphate and aspartate to form carbamoyl aspartate and inorganic phosphate, the committed step in the de novo pyrimidine nucleotide biosynthesis pathway. The polypeptide is Aspartate carbamoyltransferase catalytic subunit (Syntrophotalea carbinolica (strain DSM 2380 / NBRC 103641 / GraBd1) (Pelobacter carbinolicus)).